Here is a 668-residue protein sequence, read N- to C-terminus: DNA ligase (668 aa).

Residues 34 to 38 (DTEYD), 83 to 84 (SL), and glutamate 114 contribute to the NAD(+) site. Lysine 116 serves as the catalytic N6-AMP-lysine intermediate. 4 residues coordinate NAD(+): arginine 137, glutamate 171, lysine 286, and lysine 310. The Zn(2+) site is built by cysteine 404, cysteine 407, cysteine 422, and cysteine 427. The 81-residue stretch at 588–668 (NSDSIIANKS…FFDLLKSEKG (81 aa)) folds into the BRCT domain.

This sequence belongs to the NAD-dependent DNA ligase family. LigA subfamily. Mg(2+) serves as cofactor. Requires Mn(2+) as cofactor.

It carries out the reaction NAD(+) + (deoxyribonucleotide)n-3'-hydroxyl + 5'-phospho-(deoxyribonucleotide)m = (deoxyribonucleotide)n+m + AMP + beta-nicotinamide D-nucleotide.. Functionally, DNA ligase that catalyzes the formation of phosphodiester linkages between 5'-phosphoryl and 3'-hydroxyl groups in double-stranded DNA using NAD as a coenzyme and as the energy source for the reaction. It is essential for DNA replication and repair of damaged DNA. This is DNA ligase from Mycoplasma mycoides subsp. mycoides SC (strain CCUG 32753 / NCTC 10114 / PG1).